The primary structure comprises 389 residues: Succinate--CoA ligase [ADP-forming] subunit beta (389 aa).

The 236-residue stretch at 9 to 244 folds into the ATP-grasp domain; the sequence is KQLFAEYGLP…PSQEDEREAH (236 aa). ATP contacts are provided by residues Lys-46, 53 to 55, Glu-99, Thr-102, and Glu-107; that span reads GRG. Positions 199 and 213 each coordinate Mg(2+). Residues Asn-264 and 321–323 each bind substrate; that span reads GIV.

Belongs to the succinate/malate CoA ligase beta subunit family. In terms of assembly, heterotetramer of two alpha and two beta subunits. Mg(2+) is required as a cofactor.

The catalysed reaction is succinate + ATP + CoA = succinyl-CoA + ADP + phosphate. It catalyses the reaction GTP + succinate + CoA = succinyl-CoA + GDP + phosphate. Its pathway is carbohydrate metabolism; tricarboxylic acid cycle; succinate from succinyl-CoA (ligase route): step 1/1. Its function is as follows. Succinyl-CoA synthetase functions in the citric acid cycle (TCA), coupling the hydrolysis of succinyl-CoA to the synthesis of either ATP or GTP and thus represents the only step of substrate-level phosphorylation in the TCA. The beta subunit provides nucleotide specificity of the enzyme and binds the substrate succinate, while the binding sites for coenzyme A and phosphate are found in the alpha subunit. The chain is Succinate--CoA ligase [ADP-forming] subunit beta from Teredinibacter turnerae (strain ATCC 39867 / T7901).